Consider the following 115-residue polypeptide: NADH-ubiquinone oxidoreductase chain 3 (115 aa).

Transmembrane regions (helical) follow at residues 3-23 (FMLT…IAFW), 55-75 (FFLV…LLPL), and 84-104 (LEVM…SLAY).

This sequence belongs to the complex I subunit 3 family. As to quaternary structure, core subunit of respiratory chain NADH dehydrogenase (Complex I) which is composed of 45 different subunits. Interacts with TMEM186. Interacts with TMEM242.

Its subcellular location is the mitochondrion inner membrane. It carries out the reaction a ubiquinone + NADH + 5 H(+)(in) = a ubiquinol + NAD(+) + 4 H(+)(out). Core subunit of the mitochondrial membrane respiratory chain NADH dehydrogenase (Complex I) which catalyzes electron transfer from NADH through the respiratory chain, using ubiquinone as an electron acceptor. Essential for the catalytic activity of complex I. In Rhinolophus pumilus (Horseshoe bat), this protein is NADH-ubiquinone oxidoreductase chain 3.